Here is a 105-residue protein sequence, read N- to C-terminus: Large ribosomal subunit protein bL21c (105 aa).

Belongs to the bacterial ribosomal protein bL21 family. Part of the 50S ribosomal subunit.

Its subcellular location is the plastid. The protein localises to the chloroplast. Functionally, this protein binds to 23S rRNA. This Phaeodactylum tricornutum (strain CCAP 1055/1) protein is Large ribosomal subunit protein bL21c.